A 341-amino-acid polypeptide reads, in one-letter code: Methionine import ATP-binding protein MetN 2 (341 aa).

The 240-residue stretch at 2–241 folds into the ABC transporter domain; it reads IELKEVVKEY…PQHTVTKRFV (240 aa). 38 to 45 contributes to the ATP binding site; it reads GFSGAGKS.

It belongs to the ABC transporter superfamily. Methionine importer (TC 3.A.1.24) family. The complex is composed of two ATP-binding proteins (MetN), two transmembrane proteins (MetI) and a solute-binding protein (MetQ).

The protein resides in the cell membrane. The enzyme catalyses L-methionine(out) + ATP + H2O = L-methionine(in) + ADP + phosphate + H(+). It carries out the reaction D-methionine(out) + ATP + H2O = D-methionine(in) + ADP + phosphate + H(+). Part of the ABC transporter complex MetNIQ involved in methionine import. Responsible for energy coupling to the transport system. This Staphylococcus aureus (strain bovine RF122 / ET3-1) protein is Methionine import ATP-binding protein MetN 2.